The following is a 124-amino-acid chain: Histone H2A, embryonic (124 aa).

Residues 1–18 (MSGRGKSGKARTKAKTRS) show a composition bias toward basic residues. A disordered region spans residues 1 to 21 (MSGRGKSGKARTKAKTRSSRA). Ser2 carries the post-translational modification N-acetylserine. A Phosphoserine modification is found at Ser2. Gln104 carries the post-translational modification N5-methylglutamine. Residue Lys119 forms a Glycyl lysine isopeptide (Lys-Gly) (interchain with G-Cter in ubiquitin) linkage.

Belongs to the histone H2A family. As to quaternary structure, the nucleosome is a histone octamer containing two molecules each of H2A, H2B, H3 and H4 assembled in one H3-H4 heterotetramer and two H2A-H2B heterodimers. The octamer wraps approximately 147 bp of DNA. In terms of processing, monoubiquitination of Lys-119 gives a specific tag for epigenetic transcriptional repression. Post-translationally, phosphorylation of Ser-2 directly represses transcription.

It is found in the nucleus. It localises to the chromosome. In terms of biological role, core component of nucleosome. Nucleosomes wrap and compact DNA into chromatin, limiting DNA accessibility to the cellular machineries which require DNA as a template. Histones thereby play a central role in transcription regulation, DNA repair, DNA replication and chromosomal stability. DNA accessibility is regulated via a complex set of post-translational modifications of histones, also called histone code, and nucleosome remodeling. The sequence is that of Histone H2A, embryonic from Psammechinus miliaris (Green sea urchin).